Reading from the N-terminus, the 88-residue chain is FAD assembly factor SdhE (88 aa).

The protein belongs to the SdhE FAD assembly factor family. Monomer. Makes weak or transient interactions with SdhA. Interacts with YgfX. Interacts with FrdA.

It is found in the cytoplasm. The protein operates within antibiotic biosynthesis; prodigiosin biosynthesis. Its function is as follows. An FAD assembly protein, which accelerates covalent attachment of the cofactor into other proteins. Plays an essential role in the assembly of succinate dehydrogenase (SDH, respiratory complex II), an enzyme complex that is a component of both the tricarboxylic acid cycle and the electron transport chain, and which couples the oxidation of succinate to fumarate with the reduction of ubiquinone (coenzyme Q) to ubiquinol. Required for flavinylation (covalent attachment of FAD) of the flavoprotein subunit SdhA of SDH. Required for flavinylation of the flavoprotein subunit FrdA of fumarate reductase (FRD). Flavinylation of SDH and FRD occurs in a similar but not identical manner, as site-specific mutations display subtle differences between them. Flavinylates SdhA in vivo in the absence of the other SDH subunits; SdhE mutants that do not flavinylate also interfere with wild-type activity in a possible dominant-negative fashion. Weakly binds to FAD and facilitates its binding to SdhA. Required for production of prodigiosin antibiotic (Pig); overproduction of SdhE in a deletion mutant leads to decreased synthesis of Pig compared to wild-type. Capable of flavinylating A.pasteurianus SdhA when the SDH operon and this gene are expressed in G.oxydans; flavinylation of SdhA is detected only in the presence of sdhE. In Serratia sp. (strain ATCC 39006) (Prodigiosinella confusarubida), this protein is FAD assembly factor SdhE.